The sequence spans 582 residues: MLRLRPAVRAVSVARSVALTRSLHVSVAKFNKIEGTAPAGLPKEVKQTAGHQGHHQEIPKPDENHPRRKKFHFWRSLWRLTYLSAIASLGYIGYRIYVIRNPSDQLPADPSKKTLVVLGSGWGSVSFLKKLDTSNYNVIVVSPRNYFLFTPLLPSCPTGTIEHRSIMEPIRGIIRHKQAECQYLEADATKIDHEKRIVTIRSAVSENSKEEVIKEIPFDYLVVGVGAMSSTFGIPGVQENACFLKEIPDAQQIRRTLMDCIEKAQFEKDPEVRKRLLHTVVVGGGPTGVEFAAELQDFFEDDLRKWIPDIRDDFKVTLVEALPNVLPSFSKKLIDYTEKTFSDEKISILTKTMVKSVDENVIRAEQTKGDGTKETLEMPYGTLVWATGNTVRPVVRELMSKIPAQKGSRRGLLVNEYLVVEGTEGIWALGDCSATKYAPTAQVASQEGSYLANLLNGIAKTEDLNNEITNLEKQSEHTFDEQERKNIFAQLESKSRKLRRSRAMLPFEYSHQGSLAYIGSDRAVADLSFNFWGIMNWSSGGTMTYYFWRSAYVSMCFSMRNKILVCIDWMKVRVFGRDISRE.

The transit peptide at 1-30 directs the protein to the mitochondrion; the sequence is MLRLRPAVRAVSVARSVALTRSLHVSVAKF. The segment at 46 to 65 is disordered; the sequence is KQTAGHQGHHQEIPKPDENH. Over residues 54–65 the composition is skewed to basic and acidic residues; that stretch reads HHQEIPKPDENH. Residue 114–144 coordinates FAD; sequence TLVVLGSGWGSVSFLKKLDTSNYNVIVVSPR. Residue 277–313 participates in NAD(+) binding; it reads LHTVVVGGGPTGVEFAAELQDFFEDDLRKWIPDIRDD. Positions 454 to 501 form a coiled coil; that stretch reads LLNGIAKTEDLNNEITNLEKQSEHTFDEQERKNIFAQLESKSRKLRRS.

This sequence belongs to the NADH dehydrogenase family. FAD serves as cofactor.

The protein resides in the mitochondrion inner membrane. The enzyme catalyses a quinone + NADH + H(+) = a quinol + NAD(+). The catalysed reaction is a ubiquinone + NADH + H(+) = a ubiquinol + NAD(+). Its function is as follows. Alternative NADH-ubiquinone oxidoreductase which catalyzes the oxidation of mitochondrial NADH does not translocate protons across the inner mitochondrial membrane. The chain is External alternative NADH-ubiquinone oxidoreductase, mitochondrial (NDH2) from Yarrowia lipolytica (strain CLIB 122 / E 150) (Yeast).